Reading from the N-terminus, the 337-residue chain is Phosphate acyltransferase (337 aa).

This sequence belongs to the PlsX family. Homodimer. Probably interacts with PlsY.

It is found in the cytoplasm. The enzyme catalyses a fatty acyl-[ACP] + phosphate = an acyl phosphate + holo-[ACP]. It participates in lipid metabolism; phospholipid metabolism. Its function is as follows. Catalyzes the reversible formation of acyl-phosphate (acyl-PO(4)) from acyl-[acyl-carrier-protein] (acyl-ACP). This enzyme utilizes acyl-ACP as fatty acyl donor, but not acyl-CoA. The polypeptide is Phosphate acyltransferase (Moritella marina (Vibrio marinus)).